Reading from the N-terminus, the 142-residue chain is Hemoglobin subunit alpha-A (142 aa).

The Globin domain occupies valine 2–arginine 142. Histidine 59 contributes to the O2 binding site. Histidine 88 lines the heme b pocket.

Belongs to the globin family. As to quaternary structure, heterotetramer of two alpha chains and two beta chains. Red blood cells.

Its function is as follows. Involved in oxygen transport from the lung to the various peripheral tissues. The protein is Hemoglobin subunit alpha-A (HBAA) of Otolemur crassicaudatus (Brown greater galago).